Reading from the N-terminus, the 1131-residue chain is PolyA-specific ribonuclease subunit panl-2 (1131 aa).

Residues 489–864 (VTMQSTHGMN…LPALLAYKKK (376 aa)) enclose the USP domain. The Exonuclease domain maps to 909–1074 (VGLDAEFIKI…VDARYALKLY (166 aa)). Residues 1104 to 1115 (QTSSPLVVSTTR) are compositionally biased toward polar residues. The segment at 1104 to 1131 (QTSSPLVVSTTRKTPEDTNPADAAPKSV) is disordered.

The sequence is that of PolyA-specific ribonuclease subunit panl-2 from Caenorhabditis elegans.